Here is a 512-residue protein sequence, read N- to C-terminus: Protein spinster homolog 3 (512 aa).

The segment at Met-1–Pro-30 is disordered. The next 12 membrane-spanning stretches (helical) occupy residues Val-50–Leu-70, Gly-84–Leu-104, Ala-112–Ser-132, Ile-145–Phe-165, Val-173–Ser-193, Trp-204–Val-224, Phe-260–Trp-280, Leu-309–Ala-329, Leu-343–Thr-365, Gly-377–Val-397, Val-411–Leu-431, and Phe-450–Tyr-470. Positions Pro-481–Pro-512 are disordered.

Belongs to the major facilitator superfamily. Spinster (TC 2.A.1.49) family.

Its subcellular location is the membrane. Functionally, sphingolipid transporter. The protein is Protein spinster homolog 3 (SPNS3) of Homo sapiens (Human).